A 164-amino-acid chain; its full sequence is Phosphopantetheine adenylyltransferase (164 aa).

Position 9 (Ser-9) interacts with substrate. ATP contacts are provided by residues 9-10 (SF) and His-17. Substrate contacts are provided by Lys-41, Leu-78, and Arg-92. Residues 93–95 (GLR), Glu-103, and 128–134 (GRVITST) each bind ATP.

Belongs to the bacterial CoaD family. In terms of assembly, homohexamer. It depends on Mg(2+) as a cofactor.

The protein resides in the cytoplasm. The catalysed reaction is (R)-4'-phosphopantetheine + ATP + H(+) = 3'-dephospho-CoA + diphosphate. It functions in the pathway cofactor biosynthesis; coenzyme A biosynthesis; CoA from (R)-pantothenate: step 4/5. Functionally, reversibly transfers an adenylyl group from ATP to 4'-phosphopantetheine, yielding dephospho-CoA (dPCoA) and pyrophosphate. The sequence is that of Phosphopantetheine adenylyltransferase from Bartonella bacilliformis (strain ATCC 35685 / KC583 / Herrer 020/F12,63).